The following is a 1727-amino-acid chain: DNA-directed RNA polymerase II subunit rpb1 (1727 aa).

The Zn(2+) site is built by C66, C69, C76, H79, C106, C109, C147, and C175. Residues D486, D488, and D490 each coordinate Mg(2+). Residues 819-831 are bridging helix; that stretch reads PQEFFFHAMGGRE. Residue K1266 forms a Glycyl lysine isopeptide (Lys-Gly) (interchain with G-Cter in ubiquitin) linkage. 2 disordered regions span residues 1478–1512 and 1551–1727; these read EPSN…YDAP and PTYS…NKKK. Residues 1480-1505 show a composition bias toward polar residues; sequence SNVSYPDTPGSQTPSYSYGDGSTTPF. 23 repeat units span residues 1553–1559, 1560–1566, 1567–1573, 1574–1580, 1581–1587, 1588–1594, 1595–1601, 1602–1608, 1609–1615, 1616–1622, 1623–1629, 1630–1636, 1637–1643, 1644–1650, 1651–1657, 1658–1664, 1665–1671, 1672–1678, 1679–1685, 1686–1692, 1693–1699, 1700–1706, and 1707–1713. The tract at residues 1553 to 1713 is C-terminal domain (CTD); 23 X 7 AA tandem repeats of Y-S-P-[ST]-S-P-[FST]; the sequence is YSPTSPSYSP…SPSYSPSSPT (161 aa).

The protein belongs to the RNA polymerase beta' chain family. Component of the RNA polymerase II (Pol II) complex consisting of 12 subunits. In terms of processing, the tandem heptapeptide repeats in the C-terminal domain (CTD) can be highly phosphorylated. The phosphorylation activates Pol II. Phosphorylation occurs mainly at residues 'Ser-2' and 'Ser-5' of the heptapeptide repeat. The phosphorylation state is believed to result from the balanced action of site-specific CTD kinases and phosphatase, and a 'CTD code' that specifies the position of Pol II within the transcription cycle has been proposed. Post-translationally, following transcription stress, the elongating form of RNA polymerase II (RNA pol IIo) is polyubiquitinated via 'Lys-63'-linkages on Lys-1266 at DNA damage sites without leading to degradation: ubiquitination promotes RNA pol IIo backtracking to allow access by the transcription-coupled nucleotide excision repair (TC-NER) machinery. Subsequent DEF1-dependent polyubiquitination by the elongin complex via 'Lys-48'-linkages may lead to proteasome-mediated degradation; presumably at stalled RNA pol II where TC-NER has failed, to halt global transcription and enable 'last resort' DNA repair pathways.

Its subcellular location is the nucleus. The catalysed reaction is RNA(n) + a ribonucleoside 5'-triphosphate = RNA(n+1) + diphosphate. In terms of biological role, DNA-dependent RNA polymerase catalyzes the transcription of DNA into RNA using the four ribonucleoside triphosphates as substrates. Largest and catalytic component of RNA polymerase II which synthesizes mRNA precursors and many functional non-coding RNAs. Forms the polymerase active center together with the second largest subunit. Pol II is the central component of the basal RNA polymerase II transcription machinery. It is composed of mobile elements that move relative to each other. RPB1 is part of the core element with the central large cleft, the clamp element that moves to open and close the cleft and the jaws that are thought to grab the incoming DNA template. At the start of transcription, a single-stranded DNA template strand of the promoter is positioned within the central active site cleft of Pol II. A bridging helix emanates from RPB1 and crosses the cleft near the catalytic site and is thought to promote translocation of Pol II by acting as a ratchet that moves the RNA-DNA hybrid through the active site by switching from straight to bent conformations at each step of nucleotide addition. During transcription elongation, Pol II moves on the template as the transcript elongates. Elongation is influenced by the phosphorylation status of the C-terminal domain (CTD) of Pol II largest subunit (RPB1), which serves as a platform for assembly of factors that regulate transcription initiation, elongation, termination and mRNA processing. The protein is DNA-directed RNA polymerase II subunit rpb1 (polr2a) of Dictyostelium discoideum (Social amoeba).